A 433-amino-acid chain; its full sequence is Probable carboxypeptidase ATEG_02905 (433 aa).

Positions Met-1 to Ala-18 are cleaved as a signal peptide. Residues Pro-20–Asp-40 are disordered. N-linked (GlcNAc...) asparagine glycosylation is present at Asn-92. Position 161 (Asp-161) interacts with Zn(2+). Glu-193 serves as the catalytic Proton acceptor. Glu-194 contributes to the Zn(2+) binding site.

The protein belongs to the peptidase M20A family. Requires Zn(2+) as cofactor.

Its subcellular location is the secreted. This chain is Probable carboxypeptidase ATEG_02905, found in Aspergillus terreus (strain NIH 2624 / FGSC A1156).